We begin with the raw amino-acid sequence, 448 residues long: Zinc finger and BTB domain-containing protein 44 (448 aa).

Positions 31-98 (CDITIRVQDK…AYTATLSINT (68 aa)) constitute a BTB domain. Basic and acidic residues predominate over residues 289–298 (LSDEEVHEEV). The segment at 289–320 (LSDEEVHEEVSQPVSASQSSMSDQQTVPGSEQ) is disordered. Residues 299–313 (SQPVSASQSSMSDQQ) are compositionally biased toward low complexity. 2 consecutive C2H2-type zinc fingers follow at residues 394–416 (FQCP…MLIH) and 422–444 (FQCD…RLKH).

Its subcellular location is the nucleus. The protein is Zinc finger and BTB domain-containing protein 44 (zbtb44) of Xenopus tropicalis (Western clawed frog).